The following is a 1594-amino-acid chain: THO complex subunit 2 (1594 aa).

Residues 1 to 163 (MAAAAVVVPA…KLFYKQQKFN (163 aa)) are anchor domain; interaction with THOC5 and THOC7. Residues 164 to 534 (LLREENEGYA…GQWKNETYNG (371 aa)) form a bow domain; interaction with THOC1 dock domain and THOC3 region. The interval 535–686 (HPLLVKVKAQ…LILKEVVQKM (152 aa)) is MIF4G domain; interaction with THOC3 and DDX39B. Residues 687 to 1174 (AGIEITEEMT…LAMGYSGQLK (488 aa)) form a stern domain region. A coiled-coil region spans residues 896–965 (HTSYEREVNK…LKLEKDNWLL (70 aa)). The short motif at 923–928 (KKKKEK) is the Nuclear localization signal element. Positions 1175-1594 (SRKSHMIPEN…KHHKSSDKHR (420 aa)) are charged domain. 2 stretches are compositionally biased toward basic and acidic residues: residues 1183–1192 (ENEFHHKDPP) and 1218–1234 (KSDE…RERS). The disordered stretch occupies residues 1183–1594 (ENEFHHKDPP…KHHKSSDKHR (412 aa)). Ser-1222 carries the phosphoserine modification. Residues 1251–1264 (GNSSNGNSGSNSNK) show a composition bias toward low complexity. 3 stretches are compositionally biased toward basic and acidic residues: residues 1265–1285 (AVKE…KEKT), 1294–1343 (ALGK…EKFK), and 1353–1383 (STQE…KGGE). Thr-1385 bears the Phosphothreonine mark. Residues Ser-1390, Ser-1393, Ser-1417, Ser-1450, Ser-1486, and Ser-1516 each carry the phosphoserine modification. Over residues 1416 to 1425 (PSPSHSSTVK) the composition is skewed to polar residues. Residues 1449-1504 (KSKEREMDKKDLDKSRERSREREKKDEKDRKERKRDHSNNDREVPPDITKRRKEEN) show a composition bias toward basic and acidic residues. A coiled-coil region spans residues 1464–1491 (RERSREREKKDEKDRKERKRDHSNNDRE). Residues 1524 to 1583 (NEKDKEKNKSKSSGKEKSSSDSFKSEKMDKISSGGKKESRHDKEKIEKKEKRDSSGGKEE) show a composition bias toward basic and acidic residues. Basic residues predominate over residues 1584–1594 (KKHHKSSDKHR).

This sequence belongs to the THOC2 family. As to quaternary structure, component of the THO subcomplex, which is composed of THOC1, THOC2, THOC3, THOC5, THOC6 and THOC7. The THO subcomplex interacts with DDX39B to form the THO-DDX39B complex which multimerizes into a 28-subunit tetrameric assembly. Component of the transcription/export (TREX) complex at least composed of ALYREF/THOC4, DDX39B, SARNP/CIP29, CHTOP and the THO subcomplex; in the complex interacts with THOC1, THOC3, THOC5, THOC7 and DDX39B. TREX seems to have a dynamic structure involving ATP-dependent remodeling. Interacts with POLDIP3. Interacts with ZC3H11A. Expressed in the hippocampus and the cortical neurons.

It localises to the nucleus. Its subcellular location is the nucleus speckle. It is found in the cytoplasm. In terms of biological role, component of the THO subcomplex of the TREX complex which is thought to couple mRNA transcription, processing and nuclear export, and which specifically associates with spliced mRNA and not with unspliced pre-mRNA. Required for efficient export of polyadenylated RNA and spliced mRNA. The THOC1-THOC2-THOC3 core complex alone is sufficient to bind export factor NXF1-NXT1 and promote ATPase activity of DDX39B; in the complex THOC2 is the only component that directly interacts with DDX39B. TREX is recruited to spliced mRNAs by a transcription-independent mechanism, binds to mRNA upstream of the exon-junction complex (EJC) and is recruited in a splicing- and cap-dependent manner to a region near the 5' end of the mRNA where it functions in mRNA export to the cytoplasm via the TAP/NXF1 pathway. Required for NXF1 localization to the nuclear rim. THOC2 (and probably the THO complex) is involved in releasing mRNA from nuclear speckle domains. Plays a role for proper neuronal development. In Mus musculus (Mouse), this protein is THO complex subunit 2 (Thoc2).